Reading from the N-terminus, the 549-residue chain is MYMEISSASDDSIAYVETDPSGRYGRFREVLGKGAMKTVYKAFDQVLGMEVAWNQVKLNEVFRSPEPLQRLYSEVHLLKNLNHESIIRYCTSWIDVNRRTFNFITELFTSGTLREYRRKYQKVDIRAIKSWARQILNGLAYLHGHDPPVIHRDLKCDNIFVNGHLGQVKIGDLGLAAILRGSQNAHSVIGTPEFMAPELYEEDYNELVDIYSFGMCVLEMLTGEYPYSECTNPAQIYKKVTSGKLPDSFHLIQHTEAQRFVGKCLETVSRRLPAKELLADPFLAATDERDLAPLFRLPQQLAIQNLAANGTVVEHLPSTTDPTRTTDMSITGKMNSEDHTIFLQVQILDGDGHMRNIQFPFNILSDTPLEVALEMVKELEITDWDPLEIAAMIENEISLLVPNWRANDSSIRHESFGHEDDEDNGDTEGRTRLFSSASSSHDSPVAVRENNDDSSNDVIPDMDDGNRSSNRLLNSSTYHYSPAIDDDQNQQQRRRVRLQQKMRSLVDTRTQVLHRSLMELINKRRGRGFDPNTNELQPQPSSTDFIRRC.

One can recognise a Protein kinase domain in the interval G25 to L283. Residues T105–F108 and K155 contribute to the ATP site. The active-site Proton acceptor is D172. The tract at residues E414–Q490 is disordered. Positions D452–D463 are enriched in acidic residues. Low complexity predominate over residues R467–S476. S504 carries the phosphoserine modification. Residues R525–C549 form a disordered region. The span at P531–C549 shows a compositional bias: polar residues.

Belongs to the protein kinase superfamily. Ser/Thr protein kinase family. WNK subfamily. As to quaternary structure, interacts with AHK4.

It catalyses the reaction L-seryl-[protein] + ATP = O-phospho-L-seryl-[protein] + ADP + H(+). The enzyme catalyses L-threonyl-[protein] + ATP = O-phospho-L-threonyl-[protein] + ADP + H(+). Regulates flowering time by modulating the photoperiod pathway. In Arabidopsis thaliana (Mouse-ear cress), this protein is Probable serine/threonine-protein kinase WNK5 (WNK5).